Here is a 184-residue protein sequence, read N- to C-terminus: Acireductone dioxygenase (184 aa).

4 residues coordinate Fe(2+): His97, His99, Glu103, and His141. Positions 97, 99, 103, and 141 each coordinate Ni(2+).

Belongs to the acireductone dioxygenase (ARD) family. Monomer. Fe(2+) is required as a cofactor. The cofactor is Ni(2+).

It carries out the reaction 1,2-dihydroxy-5-(methylsulfanyl)pent-1-en-3-one + O2 = 3-(methylsulfanyl)propanoate + CO + formate + 2 H(+). The enzyme catalyses 1,2-dihydroxy-5-(methylsulfanyl)pent-1-en-3-one + O2 = 4-methylsulfanyl-2-oxobutanoate + formate + 2 H(+). Its pathway is amino-acid biosynthesis; L-methionine biosynthesis via salvage pathway; L-methionine from S-methyl-5-thio-alpha-D-ribose 1-phosphate: step 5/6. Its function is as follows. Catalyzes 2 different reactions between oxygen and the acireductone 1,2-dihydroxy-3-keto-5-methylthiopentene (DHK-MTPene) depending upon the metal bound in the active site. Fe-containing acireductone dioxygenase (Fe-ARD) produces formate and 2-keto-4-methylthiobutyrate (KMTB), the alpha-ketoacid precursor of methionine in the methionine recycle pathway. Ni-containing acireductone dioxygenase (Ni-ARD) produces methylthiopropionate, carbon monoxide and formate, and does not lie on the methionine recycle pathway. The sequence is that of Acireductone dioxygenase from Parvibaculum lavamentivorans (strain DS-1 / DSM 13023 / NCIMB 13966).